The primary structure comprises 528 residues: Propionate catabolism operon regulatory protein (528 aa).

Positions 218–461 (MLGQSPQMEQ…RNMMERLALF (244 aa)) constitute a Sigma-54 factor interaction domain. 318 to 327 (AHGGTLFLDE) contacts ATP. The H-T-H motif DNA-binding region spans 508–527 (KTAAANYLGISRTTFWRRLK).

Functionally, involved in the transcriptional regulation of the propionate catabolism operon. In Escherichia coli (strain K12), this protein is Propionate catabolism operon regulatory protein (prpR).